We begin with the raw amino-acid sequence, 59 residues long: Putative zinc finger protein ORF59a (59 aa).

The C2H2-type; degenerate zinc-finger motif lies at 11-33; it reads YQCLRCGLTFRTKKQLIRHLVNT.

The sequence is that of Putative zinc finger protein ORF59a from Acidianus hospitalis (AFV-1).